Reading from the N-terminus, the 235-residue chain is Urease accessory protein UreF (235 aa).

Belongs to the UreF family. UreD, UreF and UreG form a complex that acts as a GTP-hydrolysis-dependent molecular chaperone, activating the urease apoprotein by helping to assemble the nickel containing metallocenter of UreC. The UreE protein probably delivers the nickel.

Its subcellular location is the cytoplasm. Required for maturation of urease via the functional incorporation of the urease nickel metallocenter. This Ureaplasma urealyticum serovar 10 (strain ATCC 33699 / Western) protein is Urease accessory protein UreF.